The chain runs to 870 residues: Probable coatomer subunit gamma (870 aa).

HEAT repeat units follow at residues 60 to 97, 99 to 133, 168 to 205, 278 to 315, 316 to 350, and 389 to 425; these read TEAT…VSDD, IIVT…TGML, EVVR…NDRL, SEIQ…AHPN, AVMS…GAES, and HTVM…ENPD.

This sequence belongs to the COPG family. In terms of assembly, oligomeric complex that consists of at least the alpha, beta, beta', gamma, delta, epsilon and zeta subunits.

It is found in the cytoplasm. The protein localises to the golgi apparatus membrane. It localises to the cytoplasmic vesicle. Its subcellular location is the COPI-coated vesicle membrane. In terms of biological role, the coatomer is a cytosolic protein complex that binds to dilysine motifs and reversibly associates with Golgi non-clathrin-coated vesicles, which further mediate biosynthetic protein transport from the ER, via the Golgi up to the trans Golgi network. Coatomer complex is required for budding from Golgi membranes, and is essential for the retrograde Golgi-to-ER transport of dilysine-tagged proteins. The chain is Probable coatomer subunit gamma from Caenorhabditis elegans.